We begin with the raw amino-acid sequence, 338 residues long: Ketol-acid reductoisomerase (NADP(+)) (338 aa).

The KARI N-terminal Rossmann domain maps to 1 to 181; that stretch reads MNVFYDKDAD…GGGRAGIIET (181 aa). NADP(+)-binding positions include 24-27, R47, and S52; that span reads YGSQ. H107 is a catalytic residue. G133 contacts NADP(+). The 146-residue stretch at 182–327 folds into the KARI C-terminal knotted domain; that stretch reads NFREETETDL…AKLRAMMPWI (146 aa). Mg(2+) is bound by residues D190, E194, E226, and E230. S251 serves as a coordination point for substrate.

The protein belongs to the ketol-acid reductoisomerase family. Mg(2+) is required as a cofactor.

It catalyses the reaction (2R)-2,3-dihydroxy-3-methylbutanoate + NADP(+) = (2S)-2-acetolactate + NADPH + H(+). The enzyme catalyses (2R,3R)-2,3-dihydroxy-3-methylpentanoate + NADP(+) = (S)-2-ethyl-2-hydroxy-3-oxobutanoate + NADPH + H(+). Its pathway is amino-acid biosynthesis; L-isoleucine biosynthesis; L-isoleucine from 2-oxobutanoate: step 2/4. It functions in the pathway amino-acid biosynthesis; L-valine biosynthesis; L-valine from pyruvate: step 2/4. Functionally, involved in the biosynthesis of branched-chain amino acids (BCAA). Catalyzes an alkyl-migration followed by a ketol-acid reduction of (S)-2-acetolactate (S2AL) to yield (R)-2,3-dihydroxy-isovalerate. In the isomerase reaction, S2AL is rearranged via a Mg-dependent methyl migration to produce 3-hydroxy-3-methyl-2-ketobutyrate (HMKB). In the reductase reaction, this 2-ketoacid undergoes a metal-dependent reduction by NADPH to yield (R)-2,3-dihydroxy-isovalerate. In Burkholderia cenocepacia (strain HI2424), this protein is Ketol-acid reductoisomerase (NADP(+)).